The primary structure comprises 446 residues: MNYVPNTVDQQEQILTRIGVGSLEELFADIPESVRRQAQLKIREGLSELELVKYMGRLAAENKTVEEYTSYLGAGAYEHFIPSYVDQLLLRSEFYTAYTPYQPEISQGTLQAIYEFQTLVCELTGMDGANASMYDGASALAEAALMSCDATRRKKVLVPQTIHPEYREVLRTYLLPRGVEILEIPYQEGAVDSEALEKALNTEVAAVLIQSPNFFGMIEKAVEIGQMAHAKGGLLVMAVNPVSLGLLKSPGELGADIVVGEGQPFGNPLNFGGPYLGFLACREKYVRRMPGRIVGATKDKNGKKGYVLTLQAREQHIRREKAASNICSNEALCALAFTIHLSGLGKRGLKEMARLNLQKAHYGAEEIGKLPGMSLAFQGPFFHEFVIKTEVSPRKINEALLSHKIIGGLELSRFYPELDQHLLFCVTETKTKEDIDRLVAGMGEIK.

The protein belongs to the GcvP family. N-terminal subunit subfamily. The glycine cleavage system is composed of four proteins: P, T, L and H. In this organism, the P 'protein' is a heterodimer of two subunits.

It carries out the reaction N(6)-[(R)-lipoyl]-L-lysyl-[glycine-cleavage complex H protein] + glycine + H(+) = N(6)-[(R)-S(8)-aminomethyldihydrolipoyl]-L-lysyl-[glycine-cleavage complex H protein] + CO2. The glycine cleavage system catalyzes the degradation of glycine. The P protein binds the alpha-amino group of glycine through its pyridoxal phosphate cofactor; CO(2) is released and the remaining methylamine moiety is then transferred to the lipoamide cofactor of the H protein. The chain is Probable glycine dehydrogenase (decarboxylating) subunit 1 from Desulfitobacterium hafniense (strain DSM 10664 / DCB-2).